The sequence spans 536 residues: Bifunctional purine biosynthesis protein PurH (536 aa).

One can recognise an MGS-like domain in the interval 8–158 (IPAPDEVRIK…KNHAYVTIVT (151 aa)).

This sequence belongs to the PurH family.

It carries out the reaction (6R)-10-formyltetrahydrofolate + 5-amino-1-(5-phospho-beta-D-ribosyl)imidazole-4-carboxamide = 5-formamido-1-(5-phospho-D-ribosyl)imidazole-4-carboxamide + (6S)-5,6,7,8-tetrahydrofolate. The catalysed reaction is IMP + H2O = 5-formamido-1-(5-phospho-D-ribosyl)imidazole-4-carboxamide. Its pathway is purine metabolism; IMP biosynthesis via de novo pathway; 5-formamido-1-(5-phospho-D-ribosyl)imidazole-4-carboxamide from 5-amino-1-(5-phospho-D-ribosyl)imidazole-4-carboxamide (10-formyl THF route): step 1/1. It participates in purine metabolism; IMP biosynthesis via de novo pathway; IMP from 5-formamido-1-(5-phospho-D-ribosyl)imidazole-4-carboxamide: step 1/1. This is Bifunctional purine biosynthesis protein PurH from Rhizobium meliloti (strain 1021) (Ensifer meliloti).